A 1147-amino-acid chain; its full sequence is Disease resistance protein RPP4 (1147 aa).

A TIR domain is found at 11-175 (RRYDVFPSFS…KIANDVSNKL (165 aa)). Glu-86 is a catalytic residue. An NB-ARC domain is found at 189–446 (EDHIKAIKSI…CFFNGFKVSN (258 aa)). 18 LRR repeats span residues 548–573 (MRNL…LWSK), 584–606 (PLKL…TFKA), 608–629 (YLVN…TLPL), 630–653 (GSLK…SLAI), 655–676 (LEEL…IQNA), 698–721 (MCNL…IYLP), 722–743 (RKLK…NFKA), 744–766 (EYLV…TQPL), 767–790 (GSLK…SLAI), 792–813 (LERL…IQNA), 814–836 (TKLI…DLNL), 837–860 (ESLE…KMGC), 926–950 (LGSL…SKAT), 952–973 (LKRL…IGNL), 974–996 (HRLV…DVNL), 997–1017 (SSLI…PLIS), 1018–1042 (TRIE…DLTR), and 1044–1064 (SVLL…IFRL).

As to quaternary structure, interacts with RSH1.

The catalysed reaction is NAD(+) + H2O = ADP-D-ribose + nicotinamide + H(+). TIR-NB-LRR receptor-like protein that confers resistance to the pathogen Hyaloperonospora arabidopsis isolates Emoy2 and Emwa1 (downy mildew disease). Plays a role in the regulation of temperature response during plant growth and survival. The polypeptide is Disease resistance protein RPP4 (Arabidopsis thaliana (Mouse-ear cress)).